The following is a 294-amino-acid chain: Nucleotide-binding protein Dtur_1129 (294 aa).

10–17 (GLSGAGKS) contacts ATP. 61–64 (DIRT) is a GTP binding site.

Belongs to the RapZ-like family.

Displays ATPase and GTPase activities. The protein is Nucleotide-binding protein Dtur_1129 of Dictyoglomus turgidum (strain DSM 6724 / Z-1310).